We begin with the raw amino-acid sequence, 180 residues long: Large ribosomal subunit protein uL5c (180 aa).

It belongs to the universal ribosomal protein uL5 family. Part of the 50S ribosomal subunit; contacts the 5S rRNA.

It is found in the plastid. Its subcellular location is the chloroplast. Functionally, binds 5S rRNA, forms part of the central protuberance of the 50S subunit. In Oltmannsiellopsis viridis (Marine flagellate), this protein is Large ribosomal subunit protein uL5c (rpl5).